We begin with the raw amino-acid sequence, 25 residues long: Zinc metalloproteinase-disintegrin-like daborhagin-M (25 aa).

Residues Ser14 to Ser25 enclose the Peptidase M12B domain. Glu17 contacts Ca(2+).

Belongs to the venom metalloproteinase (M12B) family. P-III subfamily. P-IIIa sub-subfamily. As to quaternary structure, monomer. Zn(2+) serves as cofactor. N-glycosylated. Post-translationally, contains 16 disulfide bonds. Expressed by the venom gland.

The protein resides in the secreted. With respect to regulation, inhibited by EDTA, EGTA and 1,10-phenanthroline. Addition of Mg(2+) or Ca(2+) increases the casein hydrolysis rate. In terms of biological role, snake venom zinc metalloprotease that possesses high hemorrhagic activity (minimum hemorrhagic dose, MHD=0.86 ug) when subcutaneously injected into mice. Has potent fibrinogenolytic activity on alpha-chain of fibrinogen (FGA). Hydrolyzes model substrate (beta-chain of insulin) at Ala(14)-Leu(15) and Tyr(16)-Leu(17) followed by His(10)-Leu(11) and Phe(24)-Phe(25). The sequence is that of Zinc metalloproteinase-disintegrin-like daborhagin-M from Daboia siamensis (Eastern Russel's viper).